The following is a 175-amino-acid chain: Alkyl hydroperoxide reductase AhpD (175 aa).

Residue Cys-130 is the Proton donor of the active site. An intrachain disulfide couples Cys-130 to Cys-133. Residue Cys-133 is the Cysteine sulfenic acid (-SOH) intermediate of the active site.

This sequence belongs to the AhpD family. As to quaternary structure, homotrimer.

It carries out the reaction N(6)-[(R)-dihydrolipoyl]-L-lysyl-[lipoyl-carrier protein] + a hydroperoxide = N(6)-[(R)-lipoyl]-L-lysyl-[lipoyl-carrier protein] + an alcohol + H2O. Its function is as follows. Antioxidant protein with alkyl hydroperoxidase activity. Required for the reduction of the AhpC active site cysteine residues and for the regeneration of the AhpC enzyme activity. The sequence is that of Alkyl hydroperoxide reductase AhpD from Mycobacteroides abscessus (strain ATCC 19977 / DSM 44196 / CCUG 20993 / CIP 104536 / JCM 13569 / NCTC 13031 / TMC 1543 / L948) (Mycobacterium abscessus).